A 2458-amino-acid chain; its full sequence is Acetyl-CoA carboxylase 2 (2458 aa).

Phosphoserine is present on Ser-35. The interval 35 to 155 is disordered; that stretch reads SKSEANLIPS…SPSKEDKKQA (121 aa). Polar residues predominate over residues 51 to 60; sequence SDNSGETPQR. Phosphothreonine is present on Thr-70. Over residues 77 to 87 the composition is skewed to basic and acidic residues; the sequence is ASHKGPKDAGR. Phosphoserine is present on residues Ser-91 and Ser-95. A compositionally biased stretch (polar residues) spans 103-146; that stretch reads PLSSSDAAPSPELQANGTGTQGLEATDTNGLSSSARPQGQQAGS. Phosphoserine is present on residues Ser-169, Ser-175, Ser-192, Ser-195, and Ser-200. Positions 174-193 are disordered; it reads SSDEDSVAGSSRESTRKGSR. Thr-207 bears the Phosphothreonine mark. The residue at position 220 (Ser-220) is a Phosphoserine. Ser-222 is modified (phosphoserine; by AMPK). In terms of domain architecture, Biotin carboxylation spans 259-761; sequence VIEKVLIANN…DTGWLDYLIA (503 aa). Residues 414 to 609 form the ATP-grasp domain; sequence DDLQQGKRIS…LPAAQLQIAM (196 aa). ATP is bound at residue 458–463; the sequence is GGGGKG. Residue Ser-469 is modified to Phosphoserine. 3 residues coordinate Mg(2+): Glu-567, Glu-580, and Asn-582. Positions 567, 580, and 582 each coordinate Mn(2+). Arg-584 is an active-site residue. Thr-753 is subject to Phosphothreonine. Positions 888–962 constitute a Biotinyl-binding domain; that stretch reads FEKENDPTVL…EAGCVVARLE (75 aa). At Lys-929 the chain carries N6-biotinyllysine. At Ser-1340 the chain carries Phosphoserine. Thr-1342 is modified (phosphothreonine). Phosphoserine occurs at positions 1360 and 1405. The region spanning 1695–2025 is the CoA carboxyltransferase N-terminal domain; that stretch reads PYVTKDLLQA…DNHSPVPIIT (331 aa). Positions 1695 to 2345 are carboxyltransferase; sequence PYVTKDLLQA…EDQVKQEILQ (651 aa). CoA contacts are provided by Arg-1934, Lys-2238, and Arg-2240. Residues 2029-2345 enclose the CoA carboxyltransferase C-terminal domain; the sequence is PIDREIEFLP…EDQVKQEILQ (317 aa).

As to quaternary structure, monomer, homodimer, and homotetramer. Forms filamentous polymers. Interacts with MID1IP1; interaction with MID1IP1 promotes oligomerization and increases its activity in a citrate-dependent manner. Requires biotin as cofactor. Mg(2+) serves as cofactor. The cofactor is Mn(2+). In terms of processing, the biotin cofactor is covalently attached to the central biotinyl-binding domain and is required for the catalytic activity. Post-translationally, phosphorylation at Ser-222 by AMPK inactivates the enzyme. Required for the maintenance of skeletal muscle lipid and glucose homeostasis. As to expression, widely expressed with highest levels in heart, skeletal muscle, liver, adipose tissue, mammary gland, adrenal gland and colon. Isoform 3 is expressed in skeletal muscle, adipose tissue and liver (at protein level). Isoform 3 is detected at high levels in adipose tissue with lower levels in heart, liver, skeletal muscle and testis.

It localises to the mitochondrion. The enzyme catalyses hydrogencarbonate + acetyl-CoA + ATP = malonyl-CoA + ADP + phosphate + H(+). Its pathway is lipid metabolism; malonyl-CoA biosynthesis; malonyl-CoA from acetyl-CoA: step 1/1. With respect to regulation, activity is increased by oligomerization of the protein into filaments. The oligomerization and the activity of the enzyme are inhibited by phosphorylation at Ser-222. Inhibited by its product, malonyl-CoA. Activated by citrate. Activation by MID1IP1 is citrate-dependent. Soraphen A, inhibits the enzyme by preventing the formation of active filamentous oligomers. Mitochondrial enzyme that catalyzes the carboxylation of acetyl-CoA to malonyl-CoA and plays a central role in fatty acid metabolism. Catalyzes a 2 steps reaction starting with the ATP-dependent carboxylation of the biotin carried by the biotin carboxyl carrier (BCC) domain followed by the transfer of the carboxyl group from carboxylated biotin to acetyl-CoA. Through the production of malonyl-CoA that allosterically inhibits carnitine palmitoyltransferase 1 at the mitochondria, negatively regulates fatty acid oxidation. Together with its cytosolic isozyme ACACA, which is involved in de novo fatty acid biosynthesis, promotes lipid storage. The sequence is that of Acetyl-CoA carboxylase 2 from Homo sapiens (Human).